The chain runs to 1476 residues: SH3 and multiple ankyrin repeat domains protein 2 (1476 aa).

The span at leucine 66–serine 76 shows a compositional bias: polar residues. The interval leucine 66–phenylalanine 134 is disordered. Positions valine 147–cysteine 206 constitute an SH3 domain. Position 162 is a phosphoserine (valine 162). A PDZ domain is found at threonine 247–threonine 341. A Phosphoserine modification is found at serine 372. Positions arginine 391–asparagine 412 are disordered. Serine 456 bears the Phosphoserine mark. Residue threonine 485 is modified to Phosphothreonine. The interval leucine 503–cysteine 533 is disordered. The segment covering isoleucine 512–proline 528 has biased composition (pro residues). A Phosphoserine modification is found at serine 586. Disordered regions lie at residues threonine 659–arginine 916, valine 946–alanine 983, and proline 1057–aspartate 1153. Residues serine 666 to serine 678 are compositionally biased toward low complexity. The segment covering valine 711–arginine 722 has biased composition (basic and acidic residues). Serine 724 is subject to Phosphoserine. Residues leucine 783–glycine 795 are compositionally biased toward gly residues. Over residues arginine 833–serine 846 the composition is skewed to low complexity. Composition is skewed to basic and acidic residues over residues alanine 847–leucine 868 and arginine 899–arginine 916. At threonine 903 the chain carries Phosphothreonine. Residues threonine 1070–threonine 1085 are compositionally biased toward polar residues. The span at valine 1119–glutamate 1130 shows a compositional bias: basic and acidic residues. Residues threonine 1131–serine 1151 show a composition bias toward low complexity. The SH3-binding signature appears at proline 1169–proline 1175. Disordered stretches follow at residues glutamate 1195–alanine 1216 and asparagine 1260–lysine 1403. The span at isoleucine 1202–glycine 1212 shows a compositional bias: pro residues. The segment covering serine 1291–valine 1305 has biased composition (low complexity). O-linked (GlcNAc) threonine glycosylation occurs at threonine 1292. The segment covering proline 1307–serine 1317 has biased composition (polar residues). Phosphoserine is present on residues serine 1334 and serine 1338. Residues leucine 1364–proline 1375 show a composition bias toward polar residues. Over residues arginine 1387–serine 1401 the composition is skewed to low complexity. Residues tryptophan 1413–arginine 1476 form the SAM domain.

This sequence belongs to the SHANK family. In terms of assembly, is part of a complex with DLG4/PSD-95 and DLGAP1/GKAP. Interacts with CTTN/cortactin SH3 domain, DLGAP1/GKAP and alpha-latrotoxin receptor 1. Interacts with DNM2, DBNL, GRID2, BAIAP2, SLC9A3, PLCB3 and CFTR. Interacts (via proline-rich region) with PDE4D. Interacts with ABI1 (via SH3 domain). In terms of tissue distribution, detected in brain (at protein level), where it is highly expressed in Purkinje cells.

Its subcellular location is the apical cell membrane. The protein localises to the cytoplasm. The protein resides in the synapse. It is found in the postsynaptic density. It localises to the cell projection. Its subcellular location is the dendritic spine. The protein localises to the growth cone. In terms of biological role, seems to be an adapter protein in the postsynaptic density (PSD) of excitatory synapses that interconnects receptors of the postsynaptic membrane including NMDA-type and metabotropic glutamate receptors, and the actin-based cytoskeleton. May play a role in the structural and functional organization of the dendritic spine and synaptic junction. The sequence is that of SH3 and multiple ankyrin repeat domains protein 2 (Shank2) from Mus musculus (Mouse).